A 95-amino-acid chain; its full sequence is MREYDIIRRPINTEKTNLQKETDNQITFEVARDANRVDIKNAIEKIFNTRVQAVKTMQVKGKVKQRGRIVGKRRNWKKAIVKLMPGQRIDFFEGV.

Belongs to the universal ribosomal protein uL23 family. In terms of assembly, part of the 50S ribosomal subunit. Contacts protein L29, and trigger factor when it is bound to the ribosome.

Its function is as follows. One of the early assembly proteins it binds 23S rRNA. One of the proteins that surrounds the polypeptide exit tunnel on the outside of the ribosome. Forms the main docking site for trigger factor binding to the ribosome. In Desulforapulum autotrophicum (strain ATCC 43914 / DSM 3382 / VKM B-1955 / HRM2) (Desulfobacterium autotrophicum), this protein is Large ribosomal subunit protein uL23.